Here is a 372-residue protein sequence, read N- to C-terminus: NAD(P)H-quinone oxidoreductase subunit 1 (372 aa).

A run of 8 helical transmembrane segments spans residues 27–47, 97–117, 128–148, 166–186, 204–224, 254–274, 308–328, and 351–371; these read AVWMPLPMLLMLVGATIGVLI, ALFTLGPILVVIPVFLSYLIV, LGIGVFLWISLSSIAPIGLLM, AAQSISYEIPLALAVLAIAMM, ILGWNVWRQPVGLILFWIAAL, FALFYLGSYVNLVLSALMVAI, AVGITMVLLKAYFFIFLAILL, and VGLVNLLLTAGLKLTFPIAFG.

This sequence belongs to the complex I subunit 1 family. NDH-1 is composed of at least 11 different subunits.

Its subcellular location is the cellular thylakoid membrane. It catalyses the reaction a plastoquinone + NADH + (n+1) H(+)(in) = a plastoquinol + NAD(+) + n H(+)(out). The enzyme catalyses a plastoquinone + NADPH + (n+1) H(+)(in) = a plastoquinol + NADP(+) + n H(+)(out). In terms of biological role, NDH-1 shuttles electrons from an unknown electron donor, via FMN and iron-sulfur (Fe-S) centers, to quinones in the respiratory and/or the photosynthetic chain. The immediate electron acceptor for the enzyme in this species is believed to be plastoquinone. Couples the redox reaction to proton translocation, and thus conserves the redox energy in a proton gradient. The protein is NAD(P)H-quinone oxidoreductase subunit 1 of Cyanothece sp. (strain PCC 7425 / ATCC 29141).